We begin with the raw amino-acid sequence, 576 residues long: Calcium-dependent protein kinase 11 (576 aa).

Gly-2 is lipidated: N-myristoyl glycine. The interval 27 to 88 is disordered; that stretch reads PADAAPPALP…ANKAAPKVKR (62 aa). Positions 41-56 are enriched in low complexity; the sequence is APSDQAPEPVTIPPSE. The Protein kinase domain occupies 113-371; the sequence is YTIGKKLGQG…AHEALCHPWV (259 aa). ATP is bound by residues 119 to 127 and Lys-142; that span reads LGQGQFGTT. The Proton acceptor role is filled by Asp-237. Residues 377-407 form an autoinhibitory domain region; it reads APDKPLDSAVLSRLKQFSAMNKLKKMALRVI. 4 consecutive EF-hand domains span residues 414–449, 450–485, 486–521, and 522–555; these read EEIAGLKEMFKMLDTDNSGHITLEELKTGLQRVGAN, LMDSEIDALMEAADIDNSGTIDYGEFIAATLHINKV, EKEDKLFAAFSYFDKDGSGYITQDELQKACEEFGIG, and DTRIEDIIGDIDQDNDGRIDYNEFVEMMQKGNNA. Asp-427, Asp-429, Ser-431, His-433, Glu-438, Asp-463, Asp-465, Ser-467, Thr-469, Glu-474, Asp-499, Asp-501, Ser-503, Tyr-505, Glu-510, Asp-533, Asp-535, Asp-537, Arg-539, and Glu-544 together coordinate Ca(2+).

Belongs to the protein kinase superfamily. Ser/Thr protein kinase family. CDPK subfamily.

The protein resides in the membrane. It catalyses the reaction L-seryl-[protein] + ATP = O-phospho-L-seryl-[protein] + ADP + H(+). It carries out the reaction L-threonyl-[protein] + ATP = O-phospho-L-threonyl-[protein] + ADP + H(+). Activated by calcium. Autophosphorylation may play an important role in the regulation of the kinase activity. In terms of biological role, may play a role in signal transduction pathways that involve calcium as a second messenger. In Oryza sativa subsp. japonica (Rice), this protein is Calcium-dependent protein kinase 11.